A 268-amino-acid chain; its full sequence is uncharacterized protein (268 aa).

Residues 1–18 form the signal peptide; it reads MRGFLLLSLGVFSFSALA. Domain stretches follow at residues 24-184 and 185-268; these read SHDL…ELLP and SPAT…NWLR. C110 and C115 are disulfide-bonded.

In terms of assembly, monomer.

The protein localises to the periplasm. This is an uncharacterized protein from Pseudomonas aeruginosa (strain ATCC 15692 / DSM 22644 / CIP 104116 / JCM 14847 / LMG 12228 / 1C / PRS 101 / PAO1).